A 196-amino-acid polypeptide reads, in one-letter code: Putative HTH-type transcriptional regulator protein PtxE (196 aa).

Residues M1–T59 form the HTH lysR-type domain. Positions F19 to Q38 form a DNA-binding region, H-T-H motif.

The protein belongs to the LysR transcriptional regulatory family.

The sequence is that of Putative HTH-type transcriptional regulator protein PtxE (ptxE) from Stutzerimonas stutzeri (Pseudomonas stutzeri).